Reading from the N-terminus, the 273-residue chain is 4-hydroxy-tetrahydrodipicolinate reductase (273 aa).

Residues 12-17 (GAGGRM) and E38 each bind NAD(+). R39 serves as a coordination point for NADP(+). NAD(+) is bound by residues 102-104 (GTT) and 126-129 (AANF). Catalysis depends on H159, which acts as the Proton donor/acceptor. H160 serves as a coordination point for (S)-2,3,4,5-tetrahydrodipicolinate. K163 functions as the Proton donor in the catalytic mechanism. Residue 169–170 (GT) coordinates (S)-2,3,4,5-tetrahydrodipicolinate.

The protein belongs to the DapB family. As to quaternary structure, homotetramer.

The protein resides in the cytoplasm. It catalyses the reaction (S)-2,3,4,5-tetrahydrodipicolinate + NAD(+) + H2O = (2S,4S)-4-hydroxy-2,3,4,5-tetrahydrodipicolinate + NADH + H(+). The enzyme catalyses (S)-2,3,4,5-tetrahydrodipicolinate + NADP(+) + H2O = (2S,4S)-4-hydroxy-2,3,4,5-tetrahydrodipicolinate + NADPH + H(+). It participates in amino-acid biosynthesis; L-lysine biosynthesis via DAP pathway; (S)-tetrahydrodipicolinate from L-aspartate: step 4/4. Its function is as follows. Catalyzes the conversion of 4-hydroxy-tetrahydrodipicolinate (HTPA) to tetrahydrodipicolinate. The protein is 4-hydroxy-tetrahydrodipicolinate reductase of Klebsiella pneumoniae subsp. pneumoniae (strain ATCC 700721 / MGH 78578).